Here is a 196-residue protein sequence, read N- to C-terminus: Acyl-homoserine-lactone synthase (196 aa).

This sequence belongs to the autoinducer synthase family.

It catalyses the reaction a fatty acyl-[ACP] + S-adenosyl-L-methionine = an N-acyl-L-homoserine lactone + S-methyl-5'-thioadenosine + holo-[ACP] + H(+). Required for the synthesis of a yet unknown N-aceyl-homoserine lactone (N-aceyl-HSL), an autoinducer molecule which binds to PhzR and thus regulates phenazine production. The chain is Acyl-homoserine-lactone synthase (phzI) from Pseudomonas chlororaphis (Pseudomonas aureofaciens).